Here is a 154-residue protein sequence, read N- to C-terminus: 17.8 kDa class I heat shock protein (154 aa).

The 115-residue stretch at 40 to 154 (ESSAFANTRI…PEVKSIEISG (115 aa)) folds into the sHSP domain.

The protein belongs to the small heat shock protein (HSP20) family. In terms of assembly, forms oligomeric structures.

The protein resides in the cytoplasm. This is 17.8 kDa class I heat shock protein from Solanum lycopersicum (Tomato).